The following is a 308-amino-acid chain: Cytochrome b (308 aa).

The next 4 helical transmembrane spans lie at 1-21 (FGSL…LLAM), 45-66 (WLIR…YLHI), 81-101 (WNIG…GYVL), and 146-166 (FFAF…VHLT). Residues H51 and H65 each contribute to the heme b site. H150 and H164 together coordinate heme b. Residue H169 participates in a ubiquinone binding. 3 helical membrane passes run 194–214 (IKDL…ALFS), 256–276 (LGGV…PLLH), and 288–308 (LSQI…WVGS).

It belongs to the cytochrome b family. As to quaternary structure, the cytochrome bc1 complex contains 11 subunits: 3 respiratory subunits (MT-CYB, CYC1 and UQCRFS1), 2 core proteins (UQCRC1 and UQCRC2) and 6 low-molecular weight proteins (UQCRH/QCR6, UQCRB/QCR7, UQCRQ/QCR8, UQCR10/QCR9, UQCR11/QCR10 and a cleavage product of UQCRFS1). This cytochrome bc1 complex then forms a dimer. Heme b is required as a cofactor.

It is found in the mitochondrion inner membrane. Functionally, component of the ubiquinol-cytochrome c reductase complex (complex III or cytochrome b-c1 complex) that is part of the mitochondrial respiratory chain. The b-c1 complex mediates electron transfer from ubiquinol to cytochrome c. Contributes to the generation of a proton gradient across the mitochondrial membrane that is then used for ATP synthesis. In Corvus corax (Common raven), this protein is Cytochrome b (MT-CYB).